A 355-amino-acid chain; its full sequence is MIETDKLAAERIIAATPASSHEEVFERALRPRQLDDYVGQEKVRGQLEIFIEAAKRRSEPLDHVLLFGPPGLGKTTLAHIIAREMGVNLRQTSGPVLERAGDLAALLTNLEANDVLFIDEIHRLSPVVEEILYPALEDYQIDIMIGEGPAARSVKLDLQPFTLVGATTRAGMLTNPLRDRFGIVARLEFYDAEQLSRIVRRSAALLNAQIDPNGALEIAKRSRGTPRIANRLLRRVRDYAEVKADGQITAAVADAALAMLDVDPVGFDLMDRKLLEAILHKFDGGPVGIDNLAAAIGEERDTIEDVLEPYLIQQGFLQRTPRGRVATLLTYRHFGLSAPAAGSAEGSMWNTPDGA.

A large ATPase domain (RuvB-L) region spans residues 4 to 190; the sequence is TDKLAAERII…FGIVARLEFY (187 aa). ATP-binding positions include Leu-29, Arg-30, Gly-71, Lys-74, Thr-75, Thr-76, 137 to 139, Arg-180, Tyr-190, and Arg-227; that span reads EDY. Thr-75 is a Mg(2+) binding site. The tract at residues 191-261 is small ATPAse domain (RuvB-S); the sequence is DAEQLSRIVR…VADAALAMLD (71 aa). The interval 264–355 is head domain (RuvB-H); it reads PVGFDLMDRK…GSMWNTPDGA (92 aa). DNA contacts are provided by Arg-300, Arg-319, and Arg-324.

Belongs to the RuvB family. Homohexamer. Forms an RuvA(8)-RuvB(12)-Holliday junction (HJ) complex. HJ DNA is sandwiched between 2 RuvA tetramers; dsDNA enters through RuvA and exits via RuvB. An RuvB hexamer assembles on each DNA strand where it exits the tetramer. Each RuvB hexamer is contacted by two RuvA subunits (via domain III) on 2 adjacent RuvB subunits; this complex drives branch migration. In the full resolvosome a probable DNA-RuvA(4)-RuvB(12)-RuvC(2) complex forms which resolves the HJ.

The protein resides in the cytoplasm. It carries out the reaction ATP + H2O = ADP + phosphate + H(+). In terms of biological role, the RuvA-RuvB-RuvC complex processes Holliday junction (HJ) DNA during genetic recombination and DNA repair, while the RuvA-RuvB complex plays an important role in the rescue of blocked DNA replication forks via replication fork reversal (RFR). RuvA specifically binds to HJ cruciform DNA, conferring on it an open structure. The RuvB hexamer acts as an ATP-dependent pump, pulling dsDNA into and through the RuvAB complex. RuvB forms 2 homohexamers on either side of HJ DNA bound by 1 or 2 RuvA tetramers; 4 subunits per hexamer contact DNA at a time. Coordinated motions by a converter formed by DNA-disengaged RuvB subunits stimulates ATP hydrolysis and nucleotide exchange. Immobilization of the converter enables RuvB to convert the ATP-contained energy into a lever motion, pulling 2 nucleotides of DNA out of the RuvA tetramer per ATP hydrolyzed, thus driving DNA branch migration. The RuvB motors rotate together with the DNA substrate, which together with the progressing nucleotide cycle form the mechanistic basis for DNA recombination by continuous HJ branch migration. Branch migration allows RuvC to scan DNA until it finds its consensus sequence, where it cleaves and resolves cruciform DNA. The sequence is that of Holliday junction branch migration complex subunit RuvB from Burkholderia vietnamiensis (strain G4 / LMG 22486) (Burkholderia cepacia (strain R1808)).